The chain runs to 100 residues: UPF0251 protein VVA1436 (100 aa).

Belongs to the UPF0251 family.

The polypeptide is UPF0251 protein VVA1436 (Vibrio vulnificus (strain YJ016)).